A 923-amino-acid chain; its full sequence is Transportin-3 (923 aa).

The residue at position 1 (methionine 1) is an N-acetylmethionine. Residue serine 74 is modified to Phosphoserine. Threonine 896 carries the phosphothreonine modification.

Interacts with (GTP-bound) Ran. Interacts with (phosphorylated) SFRS1 and SFRS2; leading to their nuclear import. Interacts with NUP62. Interacts with RBM4. Interacts with CPSF6, promoting its nuclear import. In terms of assembly, (Microbial infection) Interacts with the HIV-1 pre-integration complex (PIC), which is composed of viral genome, matrix protein, Vpr and integrase. Interacts with HIV-1 integrase protein; the interaction is direct. Expressed in skeletal muscle.

It is found in the nucleus envelope. The protein localises to the cytoplasm. Its function is as follows. Importin, which transports target proteins into the nucleus. Specifically mediates the nuclear import of splicing factor serine/arginine (SR) proteins, such as RBM4, SFRS1 and SFRS2, by recognizing phosphorylated SR domains. Also mediates the nuclear import of serine/arginine (SR) protein CPSF6, independently of CPSF6 phosphorylation. The nuclear import process is regulated by the small GTPase Ran that partitions between cytoplasm and nucleus in the predominantly GDP- and GTP-bound form, respectively. Importin associates with target cargo proteins in the cytoplasm, and the competitive binding of GTP-bound Ran induces the release of cargos in the nucleus. Functionally, (Microbial infection) Involved in immunodeficiency virus (HIV-1) infection by importing the pre-integration complex (PIC) into the nucleus. Required for a nuclear maturation step of HIV-1 prior to integration. This chain is Transportin-3, found in Homo sapiens (Human).